The following is a 199-amino-acid chain: DNA repair RAD52-like protein 2, chloroplastic (199 aa).

A chloroplast-targeting transit peptide spans Met-1–Cys-40. The residue at position 41 (Ser-41) is an N-acetylserine.

Belongs to the RAD52 family. Expressed in roots and shoots. Expressed at low levels in cauline leaves, flower buds, flowers and siliques.

Its subcellular location is the plastid. The protein localises to the chloroplast. Involved in double-stranded DNA break repair. The polypeptide is DNA repair RAD52-like protein 2, chloroplastic (Arabidopsis thaliana (Mouse-ear cress)).